Reading from the N-terminus, the 421-residue chain is Replication-associated recombination protein A (421 aa).

45–52 (GPPGIGKT) contacts ATP.

Belongs to the AAA ATPase family. RarA/MGS1/WRNIP1 subfamily. In terms of assembly, homotetramer. Interacts with single-stranded binding protein SsbA. May interact with PriA.

It is found in the cytoplasm. The protein resides in the nucleoid. Its activity is regulated as follows. ssDNA-dependent ATP hydrolysis is stimulated by single-stranded binding protein SsbA but not by SsbB; in the presence of SsbB, ssDNA secondary structure is removed and RarA's ATPase activity is decreased. The C-terminal 9 residues of SsbA are sufficient to stimulate ATPase activity. In terms of biological role, plays a role in recombination-dependent DNA replication. Positively affects the formation of RecA threads during response to DNA damage, directly or indirectly counteracting the negative RecA modulators RecX and RecU. Stabilizes a RecA-ssDNA complex. In vitro, in the presence of SsbA, inhibits PriA-dependent DNA replication restart of both leading and lagging strands; elongation is insensitive to RarA. Plays a role in response to DNA damage, localizes to the replication fork but also to DNA elsewhere in the cell. Probably required for repair of single-stranded nicks generated by H(2)O(2). Epistatic to RecA, partially represses deletions of the error-prone translesion DNA polymerases (dinB1 and dinB2), genetically interacts with replicative helicase loaders dnaB and dnaD. Epistatic to recF and recO mutations upon DNA damage. A DNA-dependent ATPase stimulated by hairpin structures in circular single-stranded (ss)DNA or ssDNA-dsDNA junctions, by blunt end and 5'-tailed dsDNA and by single-stranded binding protein SsbA protein bound to ssDNA. Preferentially binds ssDNA and replication-fork structures; SsbA stimulates binding to ssDNA. Addition of ATP to the protein has no visible effect in vitro. In Bacillus subtilis (strain 168), this protein is Replication-associated recombination protein A.